The primary structure comprises 282 residues: ADP-ribosyl cyclase/cyclic ADP-ribose hydrolase (282 aa).

The signal sequence occupies residues 1–24; that stretch reads MSPVAIVACVCLAVTLTRISPSEA. Cystine bridges form between Cys-39–Cys-58, Cys-75–Cys-155, Cys-136–Cys-149, Cys-230–Cys-251, and Cys-263–Cys-272.

This sequence belongs to the ADP-ribosyl cyclase family. Ovotestis.

It is found in the cytoplasmic vesicle. The enzyme catalyses NAD(+) = cyclic ADP-beta-D-ribose + nicotinamide + H(+). It catalyses the reaction NAD(+) + H2O = ADP-D-ribose + nicotinamide + H(+). The catalysed reaction is nicotinate + NADP(+) = nicotinate-adenine dinucleotide phosphate + nicotinamide. Activity is presumably regulated by its sequestration in vesicles before egg fertilization. After fertilization and upon NADase release, it could then be regulated via its potential phosphorylation sites. Its function is as follows. Synthesizes cyclic ADP-ribose (cADPR), a second messenger for calcium mobilization from endoplasmic reticulum. Might make the Ca(2+) mobilizer nicotinate-adenine dinucleotide phosphate. Does not have cADPR hydrolase activity. This Aplysia kurodai (Kuroda's sea hare) protein is ADP-ribosyl cyclase/cyclic ADP-ribose hydrolase.